We begin with the raw amino-acid sequence, 242 residues long: Large ribosomal subunit protein uL1 (242 aa).

This sequence belongs to the universal ribosomal protein uL1 family. As to quaternary structure, part of the 50S ribosomal subunit.

In terms of biological role, binds directly to 23S rRNA. The L1 stalk is quite mobile in the ribosome, and is involved in E site tRNA release. Protein L1 is also a translational repressor protein, it controls the translation of the L11 operon by binding to its mRNA. The sequence is that of Large ribosomal subunit protein uL1 from Streptomyces virginiae (Streptomyces cinnamonensis).